The primary structure comprises 562 residues: Phosphoglucomutase-1 (562 aa).

Residue M1 is modified to N-acetylmethionine. K16 is subject to N6-acetyllysine. An alpha-D-glucose 1,6-bisphosphate-binding site is contributed by R23. T115 is subject to Phosphothreonine. Alpha-D-glucose 1,6-bisphosphate is bound at residue S117. S117 (phosphoserine intermediate) is an active-site residue. S117 is a Mg(2+) binding site. Phosphoserine occurs at positions 117 and 134. T185 bears the Phosphothreonine mark. At S213 the chain carries Phosphoserine. 3 residues coordinate Mg(2+): D288, D290, and D292. Residues D292 and R293 each contribute to the alpha-D-glucose 1,6-bisphosphate site. K349 carries the N6-acetyllysine modification. Y353 is modified (phosphotyrosine). T357 is an alpha-D-glucose 1,6-bisphosphate binding site. S369 is modified (phosphoserine). 3 residues coordinate alpha-D-glucose 1,6-bisphosphate: E376, S378, and K389. S378 is subject to Phosphoserine. K419 carries the post-translational modification N6-succinyllysine. T467 is modified (phosphothreonine; by PAK1). A phosphoserine mark is found at S477, S485, and S505. T507 bears the Phosphothreonine mark. Residues S509 and S541 each carry the phosphoserine modification.

Belongs to the phosphohexose mutase family. In terms of assembly, monomer. Requires Mg(2+) as cofactor. Post-translationally, phosphorylation at Thr-467 by PAK1 significantly enhances enzymatic activity.

The protein resides in the cytoplasm. The enzyme catalyses alpha-D-glucose 1-phosphate = alpha-D-glucose 6-phosphate. The catalysed reaction is O-phospho-L-seryl-[protein] + alpha-D-glucose 1-phosphate = alpha-D-glucose 1,6-bisphosphate + L-seryl-[protein]. It carries out the reaction alpha-D-glucose 1,6-bisphosphate + L-seryl-[protein] = O-phospho-L-seryl-[protein] + alpha-D-glucose 6-phosphate. Catalyzes the reversible isomerization of alpha-D-glucose 1-phosphate to alpha-D-glucose 6-phosphate. The mechanism proceeds via the intermediate compound alpha-D-glucose 1,6-bisphosphate. This enzyme participates in both the breakdown and synthesis of glucose. This Bos taurus (Bovine) protein is Phosphoglucomutase-1 (PGM1).